A 745-amino-acid polypeptide reads, in one-letter code: Bacteriophage N4 adsorption protein B (745 aa).

3 helical membrane-spanning segments follow: residues 8 to 28 (FATW…IMFI), 362 to 382 (ISNF…LLLA), and 393 to 413 (FLSI…NFGL).

The protein localises to the cell inner membrane. Its function is as follows. Required for bacteriophage N4 adsorption. May be a component of the phage receptor. The polypeptide is Bacteriophage N4 adsorption protein B (nfrB) (Escherichia coli O157:H7).